Consider the following 351-residue polypeptide: Dihydroorotate dehydrogenase (quinone) (351 aa).

FMN is bound by residues 67 to 71 (AGFDK) and T91. K71 is a binding site for substrate. Residue 116-120 (NAMGF) participates in substrate binding. Residues N145 and N178 each contribute to the FMN site. N178 is a substrate binding site. S181 (nucleophile) is an active-site residue. Substrate is bound at residue N183. The FMN site is built by K214 and T242. A substrate-binding site is contributed by 243 to 244 (NT). Residues G262, G291, and 312-313 (YS) each bind FMN.

The protein belongs to the dihydroorotate dehydrogenase family. Type 2 subfamily. In terms of assembly, monomer. The cofactor is FMN.

It localises to the cell membrane. It catalyses the reaction (S)-dihydroorotate + a quinone = orotate + a quinol. It participates in pyrimidine metabolism; UMP biosynthesis via de novo pathway; orotate from (S)-dihydroorotate (quinone route): step 1/1. Its function is as follows. Catalyzes the conversion of dihydroorotate to orotate with quinone as electron acceptor. The polypeptide is Dihydroorotate dehydrogenase (quinone) (pyrD) (Helicobacter pylori (strain J99 / ATCC 700824) (Campylobacter pylori J99)).